We begin with the raw amino-acid sequence, 193 residues long: 3-isopropylmalate dehydratase small subunit (193 aa).

The protein belongs to the LeuD family. LeuD type 1 subfamily. Heterodimer of LeuC and LeuD.

It carries out the reaction (2R,3S)-3-isopropylmalate = (2S)-2-isopropylmalate. It functions in the pathway amino-acid biosynthesis; L-leucine biosynthesis; L-leucine from 3-methyl-2-oxobutanoate: step 2/4. Catalyzes the isomerization between 2-isopropylmalate and 3-isopropylmalate, via the formation of 2-isopropylmaleate. The polypeptide is 3-isopropylmalate dehydratase small subunit (Bacillus cereus (strain AH820)).